The following is a 139-amino-acid chain: Peptide methionine sulfoxide reductase MsrB (139 aa).

Residues 14 to 137 (DEEWRRELTP…NSISLDFQPE (124 aa)) enclose the MsrB domain. Cys-53, Cys-56, Cys-102, and Cys-105 together coordinate Zn(2+). The Nucleophile role is filled by Cys-126.

It belongs to the MsrB Met sulfoxide reductase family. The cofactor is Zn(2+).

The enzyme catalyses L-methionyl-[protein] + [thioredoxin]-disulfide + H2O = L-methionyl-(R)-S-oxide-[protein] + [thioredoxin]-dithiol. This Leifsonia xyli subsp. xyli (strain CTCB07) protein is Peptide methionine sulfoxide reductase MsrB.